Here is a 152-residue protein sequence, read N- to C-terminus: MLP-like protein 165 (152 aa).

This sequence belongs to the MLP family.

The chain is MLP-like protein 165 (MLP165) from Arabidopsis thaliana (Mouse-ear cress).